The chain runs to 80 residues: Regulatory protein HrpD6 (80 aa).

Involved in the regulation of several genes of the hrp-hrc-hpa cluster, which encodes a type III secretion system (T3SS). Upregulates the expression of hpa2, hpa1 and hpaB and partially controls the expression of hrcC and hrcT. Controls the secretion of the T3SS TAL effector AvrXa27. Also regulates the expression of several HrpX-regulated protein (Xrp) genes. Has no influence on hrpG or hrpX expression. This chain is Regulatory protein HrpD6, found in Xanthomonas oryzae pv. oryzicola.